The following is a 638-amino-acid chain: Chaperone protein HtpG (638 aa).

The a; substrate-binding stretch occupies residues 1-328 (MGDVEELKFS…SSDLPLNISR (328 aa)). The b stretch occupies residues 329 to 558 (ETLQNNMVIE…EHALDIRMER (230 aa)). Residues 484 to 508 (LEKFTEGDDQQSTKKKKEKKDTDDA) form a disordered region. Residues 559–638 (FLREQKQLSY…NQVLARLFKK (80 aa)) are c.

Belongs to the heat shock protein 90 family. As to quaternary structure, homodimer.

The protein localises to the cytoplasm. Functionally, molecular chaperone. Has ATPase activity. The chain is Chaperone protein HtpG from Anaplasma marginale (strain St. Maries).